The primary structure comprises 227 residues: Octanoyltransferase (227 aa).

The BPL/LPL catalytic domain maps to 35 to 210 (DKTPDEIWLV…TFLQLVGYSA (176 aa)). Residues 74–81 (RGGQVTYH), 141–143 (SLG), and 154–156 (GLA) contribute to the substrate site. Cys-172 (acyl-thioester intermediate) is an active-site residue.

Belongs to the LipB family.

It localises to the cytoplasm. It carries out the reaction octanoyl-[ACP] + L-lysyl-[protein] = N(6)-octanoyl-L-lysyl-[protein] + holo-[ACP] + H(+). Its pathway is protein modification; protein lipoylation via endogenous pathway; protein N(6)-(lipoyl)lysine from octanoyl-[acyl-carrier-protein]: step 1/2. Catalyzes the transfer of endogenously produced octanoic acid from octanoyl-acyl-carrier-protein onto the lipoyl domains of lipoate-dependent enzymes. Lipoyl-ACP can also act as a substrate although octanoyl-ACP is likely to be the physiological substrate. The protein is Octanoyltransferase of Pectobacterium atrosepticum (strain SCRI 1043 / ATCC BAA-672) (Erwinia carotovora subsp. atroseptica).